A 342-amino-acid polypeptide reads, in one-letter code: Glucan endo-1,3-beta-glucosidase (342 aa).

A signal peptide spans 1 to 26 (MLASSPMLLFLLSLLMAYNFDTTAGQ). Glu119 serves as the catalytic Proton donor. The Nucleophile role is filled by Glu261.

Belongs to the glycosyl hydrolase 17 family. In terms of processing, the N-terminus is blocked.

It is found in the vacuole. The enzyme catalyses Hydrolysis of (1-&gt;3)-beta-D-glucosidic linkages in (1-&gt;3)-beta-D-glucans.. Its function is as follows. Is thought to be an important plant defense-related product against fungal pathogens. Accumulation of the glucanase can be detected as early as 4 hours after inoculation. This Brassica campestris (Field mustard) protein is Glucan endo-1,3-beta-glucosidase (BGL).